The chain runs to 228 residues: Urease accessory protein UreG (228 aa).

34–41 provides a ligand contact to GTP; it reads GPVGSGKT.

It belongs to the SIMIBI class G3E GTPase family. UreG subfamily. In terms of assembly, homodimer. UreD, UreF and UreG form a complex that acts as a GTP-hydrolysis-dependent molecular chaperone, activating the urease apoprotein by helping to assemble the nickel containing metallocenter of UreC. The UreE protein probably delivers the nickel.

Its subcellular location is the cytoplasm. Its function is as follows. Facilitates the functional incorporation of the urease nickel metallocenter. This process requires GTP hydrolysis, probably effectuated by UreG. The polypeptide is Urease accessory protein UreG (Rhodococcus opacus (strain B4)).